Consider the following 284-residue polypeptide: PTPSPEARVASRPFLDSPLPGSPRSGSPTGYITATKAISAGKLEHVAEKFSNFYNEIELEKQQRRMADAARFQMLTDSIAKLEKSLEAEIKRRAESDKQIQVHFESEVKGLQERTALQLADLQAAFKTSVDGLSRTMQDLHTIIKEEREQRRSDIEHLAGSLVNKVNECVAALDEERISRMDAESKILKQIATDVFRVQEKIDTEKGTREAELATLRSEIHEVLGNRNLSDEKFQTLVLDEINNLKSAVQMEREERISEDDEIVQAVNDYTRALQDGLRIVNNS.

Residues 1 to 30 are disordered; that stretch reads PTPSPEARVASRPFLDSPLPGSPRSGSPTG. The segment at 1-38 is nonhelical region; the sequence is PTPSPEARVASRPFLDSPLPGSPRSGSPTGYITATKAI. The span at 17–30 shows a compositional bias: low complexity; sequence SPLPGSPRSGSPTG. The rod stretch occupies residues 39–284; the sequence is SAGKLEHVAE…QDGLRIVNNS (246 aa). Coiled coils occupy residues 56-102 and 239-268; these read EIEL…QIQV and LDEINNLKSAVQMEREERISEDDEIVQAVN.

It belongs to the SF-assemblin family. Post-translationally, consists of at least four isoforms including two phosphorylated.

The protein localises to the cytoplasm. It is found in the cytoskeleton. Major component of the striated microtubule-associated fibers (SMAFs; system-I-fibers). This Spermatozopsis similis (Green alga) protein is SF-assemblin.